Consider the following 372-residue polypeptide: E3 ubiquitin-protein ligase RNF34 (372 aa).

Residues 56 to 107 form an FYVE-type zinc finger; sequence EGPNIVCKACGLSFSVFRKKHVCCDCKKDFCSVCSVLQENLRRCSTCHLLQE. In terms of domain architecture, SAP 1 spans 115–134; sequence LMRLKVKDLRQYLILRNIPI. S169 is modified (phosphoserine). The segment at 194 to 253 is disordered; sequence QGELMDGDQTSRSGVPAQVQSEITSANTEDDDDDDDEDDDDEEENAEDRNPGLSKERVRA. Positions 201–220 are enriched in polar residues; that stretch reads DQTSRSGVPAQVQSEITSAN. Residues 221–239 are compositionally biased toward acidic residues; sequence TEDDDDDDDEDDDDEEENA. The span at 240–252 shows a compositional bias: basic and acidic residues; that stretch reads EDRNPGLSKERVR. Phosphoserine occurs at positions 254 and 256. The region spanning 264-278 is the SAP 2 domain; it reads VEGMSVRQLKEILAR. The segment at 325-360 adopts an RING-type zinc-finger fold; it reads CRICMDAVIDCVLLECGHMVTCTKCGKRMSECPICR.

Interacts with CASP8 and CASP10. Interacts (via RING-type zinc finger) with PPARGC1A. Interacts with NOD1. Interacts with p53/TP53; involved in p53/TP53 ubiquitination. Interacts (via RING-type zinc finger) with MDM2; the interaction stabilizes MDM2. Post-translationally, autoubiquitinated (in vitro). In terms of processing, proteolytically cleaved by caspases upon induction of apoptosis by TNF. In terms of tissue distribution, ubiquitous. Detected in heart, brain, liver, skeletal muscle, kidney, pancreas, spleen, thymus, prostate, testis, ovary, colon and leukocytes.

The protein localises to the cell membrane. Its subcellular location is the endomembrane system. The protein resides in the nucleus. It localises to the nucleus speckle. It is found in the cytoplasm. The protein localises to the cytosol. The catalysed reaction is S-ubiquitinyl-[E2 ubiquitin-conjugating enzyme]-L-cysteine + [acceptor protein]-L-lysine = [E2 ubiquitin-conjugating enzyme]-L-cysteine + N(6)-ubiquitinyl-[acceptor protein]-L-lysine.. The protein operates within protein modification; protein ubiquitination. E3 ubiquitin-protein ligase that regulates several biological processes through the ubiquitin-mediated proteasomal degradation of various target proteins. Ubiquitinates the caspases CASP8 and CASP10, promoting their proteasomal degradation, to negatively regulate cell death downstream of death domain receptors in the extrinsic pathway of apoptosis. May mediate 'Lys-48'-linked polyubiquitination of RIPK1 and its subsequent proteasomal degradation thereby indirectly regulating the tumor necrosis factor-mediated signaling pathway. Negatively regulates p53/TP53 through its direct ubiquitination and targeting to proteasomal degradation. Indirectly, may also negatively regulate p53/TP53 through ubiquitination and degradation of SFN. Mediates PPARGC1A proteasomal degradation probably through ubiquitination thereby indirectly regulating the metabolism of brown fat cells. Possibly involved in innate immunity, through 'Lys-48'-linked polyubiquitination of NOD1 and its subsequent proteasomal degradation. The polypeptide is E3 ubiquitin-protein ligase RNF34 (Homo sapiens (Human)).